We begin with the raw amino-acid sequence, 73 residues long: DNA gyrase inhibitor YacG (73 aa).

Positions 12, 15, 31, and 35 each coordinate Zn(2+). Residues 47-73 are disordered; that stretch reads DYAIPGEPIDPAEPSEDRNGAEGPPTD.

The protein belongs to the DNA gyrase inhibitor YacG family. As to quaternary structure, interacts with GyrB. It depends on Zn(2+) as a cofactor.

Functionally, inhibits all the catalytic activities of DNA gyrase by preventing its interaction with DNA. Acts by binding directly to the C-terminal domain of GyrB, which probably disrupts DNA binding by the gyrase. The polypeptide is DNA gyrase inhibitor YacG (Methylococcus capsulatus (strain ATCC 33009 / NCIMB 11132 / Bath)).